The primary structure comprises 89 residues: Small ribosomal subunit protein uS15 (89 aa).

Belongs to the universal ribosomal protein uS15 family. As to quaternary structure, part of the 30S ribosomal subunit. Forms a bridge to the 50S subunit in the 70S ribosome, contacting the 23S rRNA.

One of the primary rRNA binding proteins, it binds directly to 16S rRNA where it helps nucleate assembly of the platform of the 30S subunit by binding and bridging several RNA helices of the 16S rRNA. In terms of biological role, forms an intersubunit bridge (bridge B4) with the 23S rRNA of the 50S subunit in the ribosome. This chain is Small ribosomal subunit protein uS15, found in Bacillus anthracis (strain CDC 684 / NRRL 3495).